We begin with the raw amino-acid sequence, 339 residues long: tRNA pseudouridine synthase B (339 aa).

Catalysis depends on aspartate 40, which acts as the Nucleophile. Positions 262–307 (FRRLSKFAYREEFEENTERSTAAYTLVREDANTGLTYKLPLEVELS) constitute an RPE1 insert domain.

This sequence belongs to the pseudouridine synthase TruB family. Type 1 subfamily.

It carries out the reaction uridine(55) in tRNA = pseudouridine(55) in tRNA. Functionally, responsible for synthesis of pseudouridine from uracil-55 in the psi GC loop of transfer RNAs. The chain is tRNA pseudouridine synthase B from Rickettsia felis (strain ATCC VR-1525 / URRWXCal2) (Rickettsia azadi).